The sequence spans 205 residues: Small ribosomal subunit protein uS4 (205 aa).

Basic residues predominate over residues 1-12 (MSKRIQAKHKLD). A disordered region spans residues 1-49 (MSKRIQAKHKLDRRMGQNIWGRPKSPVNRREYGPGQHGQRRKGKLSDFG). The S4 RNA-binding domain maps to 94 to 156 (RRLDAVIYRA…SKQLEIVVVA (63 aa)).

It belongs to the universal ribosomal protein uS4 family. In terms of assembly, part of the 30S ribosomal subunit. Contacts protein S5. The interaction surface between S4 and S5 is involved in control of translational fidelity.

Its function is as follows. One of the primary rRNA binding proteins, it binds directly to 16S rRNA where it nucleates assembly of the body of the 30S subunit. In terms of biological role, with S5 and S12 plays an important role in translational accuracy. In Methylobacterium nodulans (strain LMG 21967 / CNCM I-2342 / ORS 2060), this protein is Small ribosomal subunit protein uS4.